The primary structure comprises 185 residues: Ribosomal RNA small subunit methyltransferase G (185 aa).

S-adenosyl-L-methionine is bound by residues Gly59, Phe64, 110 to 111 (IQ), and Arg127.

It belongs to the methyltransferase superfamily. RNA methyltransferase RsmG family.

It localises to the cytoplasm. It catalyses the reaction guanosine(527) in 16S rRNA + S-adenosyl-L-methionine = N(7)-methylguanosine(527) in 16S rRNA + S-adenosyl-L-homocysteine. Functionally, specifically methylates the N7 position of guanine in position 527 of 16S rRNA. The protein is Ribosomal RNA small subunit methyltransferase G of Helicobacter hepaticus (strain ATCC 51449 / 3B1).